The chain runs to 387 residues: MEKIEEQFANLHIVKCSLGTKEPTYLLGIDTSKTVQAGKENLVAVLCSNGSIRIYDKERLNVLREFSGYPGLLNGVRFANSCDSVYSACTDGTVKCWDARVAREKPVQLFKGYPSNIFISFDINCNDHIICAGTEKVDDDALLVFWDARMNSQNLSTTKDSLGAYSETHSDDVTQVRFHPSNPNMVVSGSSDGLVNVFDINIDNEEDALVTTCNSISSVSCIGWSGKGYKQIYCMTHDEGFYWWDLNHLDTDEPVTRLNIQDVREVVNMKEDALDYLIGGLYHEKTDTLHVIGGTNKGRIHLMNCSMSGLTHVTSLQGGHAATVRSFCWNVQDDSLLTGGEDAQLLLWKPGAIEKTFTKKESMKIASSVHQRVRVHSNDSYKRRKKQ.

6 WD repeats span residues 21–65 (KEPT…VLRE), 68–107 (GYPG…EKPV), 112–156 (GYPS…QNLS), 168–208 (THSD…EEDA), 214–254 (NSIS…TDEP), and 319–358 (GHAA…KTFT).

The sequence is that of WD repeat-containing protein 89 (WDR89) from Homo sapiens (Human).